We begin with the raw amino-acid sequence, 213 residues long: Kynurenine formamidase (213 aa).

Trp18 lines the substrate pocket. His48, His52, and Asp54 together coordinate Zn(2+). His58 acts as the Proton donor/acceptor in catalysis. Zn(2+) is bound by residues His160 and Glu172.

It belongs to the Cyclase 1 superfamily. KynB family. Homodimer. Zn(2+) serves as cofactor.

The catalysed reaction is N-formyl-L-kynurenine + H2O = L-kynurenine + formate + H(+). It functions in the pathway amino-acid degradation; L-tryptophan degradation via kynurenine pathway; L-kynurenine from L-tryptophan: step 2/2. In terms of biological role, catalyzes the hydrolysis of N-formyl-L-kynurenine to L-kynurenine, the second step in the kynurenine pathway of tryptophan degradation. This Burkholderia cenocepacia (strain ATCC BAA-245 / DSM 16553 / LMG 16656 / NCTC 13227 / J2315 / CF5610) (Burkholderia cepacia (strain J2315)) protein is Kynurenine formamidase.